The primary structure comprises 568 residues: uncharacterized protein (568 aa).

A compositionally biased stretch (basic and acidic residues) spans 334-346 (DDNEEKNNDRPKI). Disordered regions lie at residues 334-382 (DDNE…NDQN) and 436-479 (QVEE…SCKN). A compositionally biased stretch (low complexity) spans 458–477 (KIASSASKNDNSNNKNSKSC).

This sequence to yeast YJL043w.

This is an uncharacterized protein from Saccharomyces cerevisiae (strain ATCC 204508 / S288c) (Baker's yeast).